The primary structure comprises 880 residues: Valine--tRNA ligase (880 aa).

A 'HIGH' region motif is present at residues 49–59 (PNVTGRLHLGH). A 'KMSKS' region motif is present at residues 525–529 (KMSKS). Position 528 (Lys-528) interacts with ATP. A coiled-coil region spans residues 809–879 (LEGLINIDEE…AVQKRMAELK (71 aa)).

Belongs to the class-I aminoacyl-tRNA synthetase family. ValS type 1 subfamily. As to quaternary structure, monomer.

Its subcellular location is the cytoplasm. The enzyme catalyses tRNA(Val) + L-valine + ATP = L-valyl-tRNA(Val) + AMP + diphosphate. Functionally, as ValRS can inadvertently accommodate and process structurally similar amino acids such as threonine, to avoid such errors, it has a 'posttransfer' editing activity that hydrolyzes mischarged Thr-tRNA(Val) in a tRNA-dependent manner. Catalyzes the attachment of valine to tRNA(Val). The polypeptide is Valine--tRNA ligase (Bacillus subtilis (strain 168)).